Consider the following 273-residue polypeptide: Imidazole glycerol phosphate synthase subunit HisF (273 aa).

Catalysis depends on residues D11 and D134.

This sequence belongs to the HisA/HisF family. In terms of assembly, heterodimer of HisH and HisF.

The protein localises to the cytoplasm. It carries out the reaction 5-[(5-phospho-1-deoxy-D-ribulos-1-ylimino)methylamino]-1-(5-phospho-beta-D-ribosyl)imidazole-4-carboxamide + L-glutamine = D-erythro-1-(imidazol-4-yl)glycerol 3-phosphate + 5-amino-1-(5-phospho-beta-D-ribosyl)imidazole-4-carboxamide + L-glutamate + H(+). It functions in the pathway amino-acid biosynthesis; L-histidine biosynthesis; L-histidine from 5-phospho-alpha-D-ribose 1-diphosphate: step 5/9. Functionally, IGPS catalyzes the conversion of PRFAR and glutamine to IGP, AICAR and glutamate. The HisF subunit catalyzes the cyclization activity that produces IGP and AICAR from PRFAR using the ammonia provided by the HisH subunit. This chain is Imidazole glycerol phosphate synthase subunit HisF, found in Methanosarcina acetivorans (strain ATCC 35395 / DSM 2834 / JCM 12185 / C2A).